The chain runs to 260 residues: Neuraminyllactose-binding hemagglutinin (260 aa).

Positions 1 to 27 (MRANNHFKDFAWKKCLLGASVVALLVG) are cleaved as a signal peptide. Cys28 carries N-palmitoyl cysteine lipidation. Residue Cys28 is the site of S-diacylglycerol cysteine attachment. The tract at residues 134–139 (KRTIQK) is N-acetyl-neuraminyl-alpha(2,3)-lactose binding motif.

The protein localises to the cell outer membrane. This chain is Neuraminyllactose-binding hemagglutinin (hpaA), found in Helicobacter pylori (Campylobacter pylori).